The primary structure comprises 260 residues: Troponin I 3 (260 aa).

The span at 192–219 (DLDEIMAKKKGTADGKPEWSKKEKKEEE) shows a compositional bias: basic and acidic residues. Residues 192–260 (DLDEIMAKKK…EEEEEEEEEE (69 aa)) are disordered. The span at 231–260 (PEAEPEPEAAEPAAEEPEAEEEEEEEEEEE) shows a compositional bias: acidic residues.

It belongs to the troponin I family. As to expression, expressed in body wall muscle from first larval stage to adult. In adults expression is predominantly in vulval and anal muscles, body wall muscle expression is weaker. Also expressed in vulval muscles of hermaphrodites and the sex muscles of males.

In terms of biological role, troponin I is the inhibitory subunit of troponin, the thin filament regulatory complex which confers calcium-sensitivity to muscle actomyosin ATPase activity. The sequence is that of Troponin I 3 (tni-3) from Caenorhabditis elegans.